A 292-amino-acid polypeptide reads, in one-letter code: GTP cyclohydrolase FolE2 (292 aa).

Belongs to the GTP cyclohydrolase IV family.

The catalysed reaction is GTP + H2O = 7,8-dihydroneopterin 3'-triphosphate + formate + H(+). It participates in cofactor biosynthesis; 7,8-dihydroneopterin triphosphate biosynthesis; 7,8-dihydroneopterin triphosphate from GTP: step 1/1. Converts GTP to 7,8-dihydroneopterin triphosphate. The protein is GTP cyclohydrolase FolE2 of Staphylococcus carnosus (strain TM300).